A 719-amino-acid polypeptide reads, in one-letter code: CRAL-TRIO domain-containing protein T23G5.2 (719 aa).

One can recognise a PRELI/MSF1 domain in the interval 2–175 (VQTYRSPVRI…FIEELLKKTT (174 aa)). The region spanning 319–495 (RPTVIKQYFP…FLGGSCLTTN (177 aa)) is the CRAL-TRIO domain. The GOLD domain maps to 524-681 (HSTYTSTATW…KCRLIYYYEI (158 aa)). The tract at residues 700–719 (SSFSSIAPPTPPTPGTPRNP) is disordered. Residues 707–719 (PPTPPTPGTPRNP) are compositionally biased toward pro residues.

This Caenorhabditis elegans protein is CRAL-TRIO domain-containing protein T23G5.2.